The chain runs to 336 residues: NADH-quinone oxidoreductase subunit H (336 aa).

8 helical membrane passes run 4 to 24 (YILW…LVVA), 75 to 95 (YLFF…WAVI), 108 to 128 (LGLL…VIAG), 154 to 174 (MGFA…TGII), 181 to 201 (LWHW…IAGI), 233 to 253 (LFFL…SIMF), 272 to 292 (FVPG…MFLW), and 308 to 328 (LGWK…ACMV).

Belongs to the complex I subunit 1 family. In terms of assembly, NDH-1 is composed of 14 different subunits. Subunits NuoA, H, J, K, L, M, N constitute the membrane sector of the complex.

Its subcellular location is the cell inner membrane. The catalysed reaction is a quinone + NADH + 5 H(+)(in) = a quinol + NAD(+) + 4 H(+)(out). Its function is as follows. NDH-1 shuttles electrons from NADH, via FMN and iron-sulfur (Fe-S) centers, to quinones in the respiratory chain. The immediate electron acceptor for the enzyme in this species is believed to be ubiquinone. Couples the redox reaction to proton translocation (for every two electrons transferred, four hydrogen ions are translocated across the cytoplasmic membrane), and thus conserves the redox energy in a proton gradient. This subunit may bind ubiquinone. The polypeptide is NADH-quinone oxidoreductase subunit H (Francisella philomiragia subsp. philomiragia (strain ATCC 25017 / CCUG 19701 / FSC 153 / O#319-036)).